A 485-amino-acid polypeptide reads, in one-letter code: Adenosylhomocysteinase (485 aa).

Substrate-binding residues include Thr-64, Asp-139, and Glu-205. An NAD(+)-binding site is contributed by 206 to 208 (TTT). Substrate contacts are provided by Lys-235 and Asp-239. Residues Asn-240, 269 to 274 (GYGDVG), Glu-292, Asn-327, 348 to 350 (IGH), and Asn-397 each bind NAD(+).

Belongs to the adenosylhomocysteinase family. NAD(+) is required as a cofactor.

The enzyme catalyses S-adenosyl-L-homocysteine + H2O = L-homocysteine + adenosine. Its pathway is amino-acid biosynthesis; L-homocysteine biosynthesis; L-homocysteine from S-adenosyl-L-homocysteine: step 1/1. In terms of biological role, adenosylhomocysteine is a competitive inhibitor of S-adenosyl-L-methionine-dependent methyl transferase reactions; therefore adenosylhomocysteinase may play a key role in the control of methylations via regulation of the intracellular concentration of adenosylhomocysteine. In Nicotiana sylvestris (Wood tobacco), this protein is Adenosylhomocysteinase (SAHH).